Reading from the N-terminus, the 750-residue chain is Photosystem I P700 chlorophyll a apoprotein A1 (750 aa).

A run of 8 helical transmembrane segments spans residues 70 to 93, 156 to 179, 195 to 219, 291 to 309, 346 to 369, 385 to 411, 433 to 455, and 531 to 549; these read VFSA…FHGA, LYCT…FHYH, LNHH…HVSL, IAHH…GHMY, WHAQ…HHMY, LSLF…IFMV, AIIS…LYIH, and FLVH…LILL. [4Fe-4S] cluster-binding residues include cysteine 573 and cysteine 582. 2 helical membrane passes run 589–610 and 664–686; these read HVFL…HFSW and LSAY…MFLF. Histidine 675 contacts chlorophyll a'. Chlorophyll a-binding residues include methionine 683 and tyrosine 691. Tryptophan 692 provides a ligand contact to phylloquinone. Residues 724–744 traverse the membrane as a helical segment; it reads AVGVTHYLLGGIATTWAFFLA.

Belongs to the PsaA/PsaB family. As to quaternary structure, the PsaA/B heterodimer binds the P700 chlorophyll special pair and subsequent electron acceptors. PSI consists of a core antenna complex that captures photons, and an electron transfer chain that converts photonic excitation into a charge separation. The eukaryotic PSI reaction center is composed of at least 11 subunits. P700 is a chlorophyll a/chlorophyll a' dimer, A0 is one or more chlorophyll a, A1 is one or both phylloquinones and FX is a shared 4Fe-4S iron-sulfur center. is required as a cofactor.

The protein localises to the plastid. Its subcellular location is the chloroplast thylakoid membrane. The catalysed reaction is reduced [plastocyanin] + hnu + oxidized [2Fe-2S]-[ferredoxin] = oxidized [plastocyanin] + reduced [2Fe-2S]-[ferredoxin]. Its function is as follows. PsaA and PsaB bind P700, the primary electron donor of photosystem I (PSI), as well as the electron acceptors A0, A1 and FX. PSI is a plastocyanin-ferredoxin oxidoreductase, converting photonic excitation into a charge separation, which transfers an electron from the donor P700 chlorophyll pair to the spectroscopically characterized acceptors A0, A1, FX, FA and FB in turn. Oxidized P700 is reduced on the lumenal side of the thylakoid membrane by plastocyanin. The polypeptide is Photosystem I P700 chlorophyll a apoprotein A1 (Cucumis sativus (Cucumber)).